Consider the following 302-residue polypeptide: Pantothenate synthetase 4 (302 aa).

Residue 51–58 coordinates ATP; the sequence is MGALHEGH. His58 functions as the Proton donor in the catalytic mechanism. A (R)-pantoate-binding site is contributed by Gln82. Residue Gln82 coordinates beta-alanine. 166-169 is an ATP binding site; it reads GRKD. A (R)-pantoate-binding site is contributed by Gln172. ATP is bound by residues Ala195 and 203–206; that span reads RSSR.

Belongs to the pantothenate synthetase family. As to quaternary structure, homodimer.

The protein localises to the cytoplasm. The enzyme catalyses (R)-pantoate + beta-alanine + ATP = (R)-pantothenate + AMP + diphosphate + H(+). It functions in the pathway cofactor biosynthesis; (R)-pantothenate biosynthesis; (R)-pantothenate from (R)-pantoate and beta-alanine: step 1/1. Functionally, catalyzes the condensation of pantoate with beta-alanine in an ATP-dependent reaction via a pantoyl-adenylate intermediate. This chain is Pantothenate synthetase 4, found in Frankia alni (strain DSM 45986 / CECT 9034 / ACN14a).